The chain runs to 510 residues: MYQLEIIPGKLSLKQLREVSRQPTQLSLTEDALPEMLISAEAVAQVIKDDKVVYGINTGFGLLANTRIAAEDLETLQRSIVLSHAAGIGTFMDDATVRMMIVLKVNSLSRGYSGIRPLVVNALMQLVNTEVYPCIPKKGSVGASGDLAPLAHMSTVLLGEGEARYQGEVITGAQALEIAGLEPITLAPKEGLALLNGTQASTAFALEGFFAAEDLYAAATVCGAMSVDAALGSRRPFDPRIHRVRGHRSQIDAAMGYRHMLGQNSEIGLSHQQCEKVQDPYSLRCQPQVMGACLQQIRNSAVTLEVEANAVSDNPLVFADDGDIISGGNFHAEPVAMAADNLALAIAEIGSLSERRMALLIDSGLSKLPPFLVDNGGVNSGFMIAQVTAAALASENKSLAHPASVDSLPTSANQEDHVSMATFAARRLTDMAENTRGILAVELLAAAQGLDFRSPNKSSELIEQAKMQLRERVSFYDKDRYFAPDIAKANQLLKEATYNALMPATLLPSL.

A cross-link (5-imidazolinone (Ala-Gly)) is located at residues 143-145 (ASG). The residue at position 144 (serine 144) is a 2,3-didehydroalanine (Ser).

The protein belongs to the PAL/histidase family. Contains an active site 4-methylidene-imidazol-5-one (MIO), which is formed autocatalytically by cyclization and dehydration of residues Ala-Ser-Gly.

It localises to the cytoplasm. It catalyses the reaction L-histidine = trans-urocanate + NH4(+). Its pathway is amino-acid degradation; L-histidine degradation into L-glutamate; N-formimidoyl-L-glutamate from L-histidine: step 1/3. The protein is Histidine ammonia-lyase of Photobacterium profundum (strain SS9).